The following is a 643-amino-acid chain: Carboxy-terminal kinesin 2 (643 aa).

Disordered regions lie at residues 1–42 (MDST…SSLE) and 81–101 (MRPK…KTKV). The globular stretch occupies residues 1–116 (MDSTDKKVQV…QPAAIGAEKK (116 aa)). Over residues 88–101 (PGITSTSFSGKTKV) the composition is skewed to polar residues. Residues 117–296 (KRAAWDLKGQ…LVQELKGNIR (180 aa)) adopt a coiled-coil conformation. The Kinesin motor domain occupies 294 to 633 (NIRVFCRVRP…LRFASKVNEC (340 aa)). Position 386 to 393 (386 to 393 (GQTGSGKT)) interacts with ATP.

Belongs to the TRAFAC class myosin-kinesin ATPase superfamily. Kinesin family. NCD subfamily.

It is found in the cytoplasm. Its subcellular location is the cytoskeleton. Its function is as follows. Promotes mitotic spindle assembly. The protein is Carboxy-terminal kinesin 2 of Xenopus laevis (African clawed frog).